The sequence spans 264 residues: 3-methyl-2-oxobutanoate hydroxymethyltransferase (264 aa).

The Mg(2+) site is built by Asp-45 and Asp-84. Residues 45 to 46 (DS), Asp-84, and Lys-112 contribute to the 3-methyl-2-oxobutanoate site. Glu-114 serves as a coordination point for Mg(2+). The active-site Proton acceptor is Glu-181.

This sequence belongs to the PanB family. In terms of assembly, homodecamer; pentamer of dimers. Mg(2+) is required as a cofactor.

It is found in the cytoplasm. The enzyme catalyses 3-methyl-2-oxobutanoate + (6R)-5,10-methylene-5,6,7,8-tetrahydrofolate + H2O = 2-dehydropantoate + (6S)-5,6,7,8-tetrahydrofolate. It functions in the pathway cofactor biosynthesis; (R)-pantothenate biosynthesis; (R)-pantoate from 3-methyl-2-oxobutanoate: step 1/2. Catalyzes the reversible reaction in which hydroxymethyl group from 5,10-methylenetetrahydrofolate is transferred onto alpha-ketoisovalerate to form ketopantoate. The sequence is that of 3-methyl-2-oxobutanoate hydroxymethyltransferase from Shigella dysenteriae serotype 1 (strain Sd197).